A 614-amino-acid chain; its full sequence is Serine/threonine-protein kinase-like protein E (614 aa).

The Protein kinase domain maps to Tyr15 to Ser404. ATP is bound at residue Leu21 to Gln29. Over residues Pro256–Gly269 the composition is skewed to polar residues. Residues Pro256 to Ser284 form a disordered region.

It belongs to the protein kinase superfamily. Ser/Thr protein kinase family.

Lacks protein kinase activity. The polypeptide is Serine/threonine-protein kinase-like protein E (spkE) (Synechocystis sp. (strain ATCC 27184 / PCC 6803 / Kazusa)).